A 476-amino-acid polypeptide reads, in one-letter code: Glycogen synthase (476 aa).

ADP-alpha-D-glucose is bound at residue lysine 15.

The protein belongs to the glycosyltransferase 1 family. Bacterial/plant glycogen synthase subfamily.

The catalysed reaction is [(1-&gt;4)-alpha-D-glucosyl](n) + ADP-alpha-D-glucose = [(1-&gt;4)-alpha-D-glucosyl](n+1) + ADP + H(+). It functions in the pathway glycan biosynthesis; glycogen biosynthesis. Its function is as follows. Synthesizes alpha-1,4-glucan chains using ADP-glucose. In Haemophilus influenzae (strain 86-028NP), this protein is Glycogen synthase.